The chain runs to 569 residues: Arginine--tRNA ligase (569 aa).

Positions 123-133 match the 'HIGH' region motif; the sequence is ANPNGPLHVGH.

Belongs to the class-I aminoacyl-tRNA synthetase family.

It is found in the cytoplasm. It catalyses the reaction tRNA(Arg) + L-arginine + ATP = L-arginyl-tRNA(Arg) + AMP + diphosphate. The protein is Arginine--tRNA ligase of Methanosarcina barkeri (strain Fusaro / DSM 804).